A 211-amino-acid chain; its full sequence is uncharacterized protein (211 aa).

This is an uncharacterized protein from Lactuca sativa (Garden lettuce).